The sequence spans 197 residues: Imidazoleglycerol-phosphate dehydratase (197 aa).

This sequence belongs to the imidazoleglycerol-phosphate dehydratase family.

The protein localises to the cytoplasm. It carries out the reaction D-erythro-1-(imidazol-4-yl)glycerol 3-phosphate = 3-(imidazol-4-yl)-2-oxopropyl phosphate + H2O. Its pathway is amino-acid biosynthesis; L-histidine biosynthesis; L-histidine from 5-phospho-alpha-D-ribose 1-diphosphate: step 6/9. This Nitrosococcus oceani (strain ATCC 19707 / BCRC 17464 / JCM 30415 / NCIMB 11848 / C-107) protein is Imidazoleglycerol-phosphate dehydratase.